A 329-amino-acid chain; its full sequence is DNA-directed RNA polymerase subunit alpha (329 aa).

The tract at residues Met-1 to Arg-235 is alpha N-terminal domain (alpha-NTD). Residues Phe-249–Glu-329 form an alpha C-terminal domain (alpha-CTD) region.

This sequence belongs to the RNA polymerase alpha chain family. As to quaternary structure, homodimer. The RNAP catalytic core consists of 2 alpha, 1 beta, 1 beta' and 1 omega subunit. When a sigma factor is associated with the core the holoenzyme is formed, which can initiate transcription.

The enzyme catalyses RNA(n) + a ribonucleoside 5'-triphosphate = RNA(n+1) + diphosphate. In terms of biological role, DNA-dependent RNA polymerase catalyzes the transcription of DNA into RNA using the four ribonucleoside triphosphates as substrates. This is DNA-directed RNA polymerase subunit alpha from Aeromonas hydrophila subsp. hydrophila (strain ATCC 7966 / DSM 30187 / BCRC 13018 / CCUG 14551 / JCM 1027 / KCTC 2358 / NCIMB 9240 / NCTC 8049).